The sequence spans 309 residues: Xylose/arabinose import permease protein XacI (309 aa).

Helical transmembrane passes span 29 to 49 (LVVF…MTAI), 89 to 109 (LIMS…AAYG), 121 to 141 (MLML…VPLA), 170 to 190 (ELVP…TILF), 227 to 247 (MFGV…LFAF), and 282 to 302 (AAFL…EQFA). Residues 85 to 297 (FFNSLIMSIP…VPTLILYVAF (213 aa)) form the ABC transmembrane type-1 domain.

This sequence belongs to the binding-protein-dependent transport system permease family. The complex is composed of two ATP-binding proteins (XacJ and XacK), two transmembrane proteins (XacH and XacI) and a solute-binding protein (XacG).

The protein localises to the cell membrane. Its function is as follows. Part of the ABC transporter complex XacGHIJK involved in the uptake of xylose and arabinose. Responsible for the translocation of the substrate across the membrane. This Haloferax volcanii (strain ATCC 29605 / DSM 3757 / JCM 8879 / NBRC 14742 / NCIMB 2012 / VKM B-1768 / DS2) (Halobacterium volcanii) protein is Xylose/arabinose import permease protein XacI.